We begin with the raw amino-acid sequence, 149 residues long: uncharacterized protein (149 aa).

To B.subtilis XkdN.

This is an uncharacterized protein from Bacillus subtilis (strain 168).